A 180-amino-acid chain; its full sequence is Oligoribonuclease (180 aa).

Residues 7-168 (LVWIDLEMTG…QDIRDSIDEL (162 aa)) form the Exonuclease domain. The active site involves Y128.

This sequence belongs to the oligoribonuclease family.

The protein localises to the cytoplasm. Functionally, 3'-to-5' exoribonuclease specific for small oligoribonucleotides. In Dichelobacter nodosus (strain VCS1703A), this protein is Oligoribonuclease.